Reading from the N-terminus, the 376-residue chain is Palmitoyltransferase PFA4 (376 aa).

Topologically, residues Met-1–Gly-11 are cytoplasmic. Residues Ile-12–Leu-32 traverse the membrane as a helical segment. Residues Asn-33 to Gln-40 lie on the Lumenal side of the membrane. A helical transmembrane segment spans residues Leu-41–Pro-61. The Cytoplasmic segment spans residues Pro-62–His-122. One can recognise a DHHC domain in the interval Val-78–Phe-128. The active-site S-palmitoyl cysteine intermediate is the Cys-108. The chain crosses the membrane as a helical span at residues Phe-123–Thr-143. Over Arg-144–Glu-163 the chain is Lumenal. The chain crosses the membrane as a helical span at residues Leu-164–Leu-184. Residues Met-185–Glu-376 are Cytoplasmic-facing.

This sequence belongs to the DHHC palmitoyltransferase family. PFA4 subfamily.

Its subcellular location is the endoplasmic reticulum membrane. The catalysed reaction is L-cysteinyl-[protein] + hexadecanoyl-CoA = S-hexadecanoyl-L-cysteinyl-[protein] + CoA. Functionally, mediates the reversible addition of palmitate to target proteins, thereby regulating their membrane association and biological function. In Candida glabrata (strain ATCC 2001 / BCRC 20586 / JCM 3761 / NBRC 0622 / NRRL Y-65 / CBS 138) (Yeast), this protein is Palmitoyltransferase PFA4.